Here is a 115-residue protein sequence, read N- to C-terminus: Probable non-functional T cell receptor beta variable 7-1 (115 aa).

A signal peptide spans 1–21 (MGTRLLCWAAICLLGADHTGA). Residues 22–115 (GVSQSLRHKV…LAVYLCASSS (94 aa)) form the Ig-like domain.

Most probably, the alpha-beta TR is not assembled due to incorrect folding of the beta chain. Alpha-beta TR is a heterodimer composed of an alpha and beta chain; disulfide-linked. The alpha-beta TR is associated with the transmembrane signaling CD3 coreceptor proteins to form the TR-CD3 (TcR or TCR). The assembly of alpha-beta TR heterodimers with CD3 occurs in the endoplasmic reticulum where a single alpha-beta TR heterodimer associates with one CD3D-CD3E heterodimer, one CD3G-CD3E heterodimer and one CD247 homodimer forming a stable octameric structure. CD3D-CD3E and CD3G-CD3E heterodimers preferentially associate with TR alpha and TR beta chains, respectively. The association of the CD247 homodimer is the last step of TcR assembly in the endoplasmic reticulum and is required for transport to the cell surface.

The protein resides in the cell membrane. In terms of biological role, probable non-functional open reading frame (ORF) of V region of the variable domain of T cell receptor (TR) beta chain. Non-functional ORF generally cannot participate in the synthesis of a productive T cell receptor (TR) chain due to altered V-(D)-J or switch recombination and/or splicing site (at mRNA level) and/or conserved amino acid change (protein level). Alpha-beta T cell receptors are antigen specific receptors which are essential to the immune response and are present on the cell surface of T lymphocytes. Recognize peptide-major histocompatibility (MH) (pMH) complexes that are displayed by antigen presenting cells (APC), a prerequisite for efficient T cell adaptive immunity against pathogens. Binding of alpha-beta TR to pMH complex initiates TR-CD3 clustering on the cell surface and intracellular activation of LCK that phosphorylates the ITAM motifs of CD3G, CD3D, CD3E and CD247 enabling the recruitment of ZAP70. In turn ZAP70 phosphorylates LAT, which recruits numerous signaling molecules to form the LAT signalosome. The LAT signalosome propagates signal branching to three major signaling pathways, the calcium, the mitogen-activated protein kinase (MAPK) kinase and the nuclear factor NF-kappa-B (NF-kB) pathways, leading to the mobilization of transcription factors that are critical for gene expression and essential for T cell growth and differentiation. The T cell repertoire is generated in the thymus, by V-(D)-J rearrangement. This repertoire is then shaped by intrathymic selection events to generate a peripheral T cell pool of self-MH restricted, non-autoaggressive T cells. Post-thymic interaction of alpha-beta TR with the pMH complexes shapes TR structural and functional avidity. This Homo sapiens (Human) protein is Probable non-functional T cell receptor beta variable 7-1.